The following is a 397-amino-acid chain: Acetylornithine aminotransferase (397 aa).

Residue phenylalanine 129 participates in pyridoxal 5'-phosphate binding. Arginine 132 contacts N(2)-acetyl-L-ornithine. Aspartate 214–glutamine 217 contacts pyridoxal 5'-phosphate. N6-(pyridoxal phosphate)lysine is present on lysine 243. Position 271 (serine 271) interacts with N(2)-acetyl-L-ornithine. Threonine 272 lines the pyridoxal 5'-phosphate pocket.

This sequence belongs to the class-III pyridoxal-phosphate-dependent aminotransferase family. ArgD subfamily. Homodimer. Requires pyridoxal 5'-phosphate as cofactor.

The protein resides in the cytoplasm. The catalysed reaction is N(2)-acetyl-L-ornithine + 2-oxoglutarate = N-acetyl-L-glutamate 5-semialdehyde + L-glutamate. The protein operates within amino-acid biosynthesis; L-arginine biosynthesis; N(2)-acetyl-L-ornithine from L-glutamate: step 4/4. In Neisseria meningitidis serogroup A / serotype 4A (strain DSM 15465 / Z2491), this protein is Acetylornithine aminotransferase.